A 195-amino-acid chain; its full sequence is uncharacterized protein (195 aa).

In terms of domain architecture, HTH tetR-type spans 10–70 (EETVARLLQA…ATAYEVLRRQ (61 aa)). Positions 33–52 (SAAVITKRAGVSVGALFRHF) form a DNA-binding region, H-T-H motif.

This is an uncharacterized protein from Mycobacterium tuberculosis (strain CDC 1551 / Oshkosh).